The chain runs to 107 residues: UPF0145 protein PC1_1703 (107 aa).

Belongs to the UPF0145 family.

This chain is UPF0145 protein PC1_1703, found in Pectobacterium carotovorum subsp. carotovorum (strain PC1).